A 679-amino-acid chain; its full sequence is Methyl-accepting chemotaxis protein McpB (679 aa).

Divergent domain HAMP regions lie at residues 8–56 (AVAQ…RQLR), 63–112 (QQVE…AAHI), and 111–156 (HIAV…ERLR). The PAS domain maps to 171-213 (YNARIKSALDNVSANVMIADNDLNIIYMNRTVSEMLGRAEADI). Residue His-234 coordinates heme. The short motif at 285 to 287 (DRT) is the DxT. Important for signal propagation element. The divergent domain HAMP 4 stretch occupies residues 289 to 332 (EHRAEQEVSQLVQAAAAGDFSKRVEEAGKEGFFLRLAKDLNSLV). An HAMP 5 domain is found at 333–385 (DTADRGLRDVSRMLGALAQGDLTQRIEADYQGTFGQLKDFSNDTAQSLSRMLG). Positions 390–619 (AADTINTAAS…EAAAAAEAMQ (230 aa)) constitute a Methyl-accepting transducer domain. Disordered stretches follow at residues 405–425 (NAELSARTEQQASSLEETASS) and 644–679 (ASARPSAPRPSAPAPLARSGMARASKARKEDGWEEF). The span at 411 to 425 (RTEQQASSLEETASS) shows a compositional bias: polar residues. Over residues 670–679 (ARKEDGWEEF) the composition is skewed to basic and acidic residues. Positions 675–679 (GWEEF) match the GWEEF pentapeptide. Important for methylation by CheR2 motif.

It belongs to the methyl-accepting chemotaxis (MCP) protein family. In terms of assembly, homodimer. The PAS domains form dimers in the presence and absence of oxygen. Interacts with the methyltransferase CheR2 via the C-terminal McpB pentapeptide GWEEF. Interacts with the methylesterase/gutaminase CheB2, which also binds to the GWEEF pentapeptide. In terms of processing, methylated by CheR2, but not by CheR1, CheR3 or WspC. Demethylated by CheB2. In vitro, can be methylated by E.coli CheR.

It is found in the cytoplasm. Functionally, chemoreceptor that plays a critical role in the virulence and pathogenesis of P.aeruginosa in a variety of hosts. Probably acts through oxygen sensing. Uses a heme-based sensor. Could be involved in chemotaxis. When expressed in E.coli, is able to sense and mediate repellent responses to oxygen, carbon monoxide and nitric oxide. In Pseudomonas aeruginosa (strain ATCC 15692 / DSM 22644 / CIP 104116 / JCM 14847 / LMG 12228 / 1C / PRS 101 / PAO1), this protein is Methyl-accepting chemotaxis protein McpB.